The following is a 292-amino-acid chain: Acetyl-coenzyme A carboxylase carboxyl transferase subunit beta (292 aa).

One can recognise a CoA carboxyltransferase N-terminal domain in the interval 35 to 292 (VFSQCEQCNS…LKLHAKKVTS (258 aa)). The Zn(2+) site is built by Cys-39, Cys-42, Cys-58, and Cys-61. A C4-type zinc finger spans residues 39–61 (CEQCNSAIYNKDLEHNYEVCPYC).

It belongs to the AccD/PCCB family. Acetyl-CoA carboxylase is a heterohexamer composed of biotin carboxyl carrier protein (AccB), biotin carboxylase (AccC) and two subunits each of ACCase subunit alpha (AccA) and ACCase subunit beta (AccD). It depends on Zn(2+) as a cofactor.

Its subcellular location is the cytoplasm. The catalysed reaction is N(6)-carboxybiotinyl-L-lysyl-[protein] + acetyl-CoA = N(6)-biotinyl-L-lysyl-[protein] + malonyl-CoA. It participates in lipid metabolism; malonyl-CoA biosynthesis; malonyl-CoA from acetyl-CoA: step 1/1. Component of the acetyl coenzyme A carboxylase (ACC) complex. Biotin carboxylase (BC) catalyzes the carboxylation of biotin on its carrier protein (BCCP) and then the CO(2) group is transferred by the transcarboxylase to acetyl-CoA to form malonyl-CoA. This is Acetyl-coenzyme A carboxylase carboxyl transferase subunit beta from Acholeplasma laidlawii (strain PG-8A).